The chain runs to 212 residues: Glycerol-3-phosphate acyltransferase (212 aa).

5 helical membrane passes run 9–29, 67–87, 95–115, 128–148, and 168–190; these read AACLVPVILTALLLLAIGYLL, GPALVVFLIDVGKGALAVLLA, WLQVLAGLAALAGHIWPVWLG, MFLGLAWPVGLACFGLFMAVI, and LMVVSGGSSAYVVVSLVASLMVL.

It belongs to the PlsY family. Probably interacts with PlsX.

The protein resides in the cell inner membrane. It carries out the reaction an acyl phosphate + sn-glycerol 3-phosphate = a 1-acyl-sn-glycero-3-phosphate + phosphate. It participates in lipid metabolism; phospholipid metabolism. In terms of biological role, catalyzes the transfer of an acyl group from acyl-phosphate (acyl-PO(4)) to glycerol-3-phosphate (G3P) to form lysophosphatidic acid (LPA). This enzyme utilizes acyl-phosphate as fatty acyl donor, but not acyl-CoA or acyl-ACP. The protein is Glycerol-3-phosphate acyltransferase of Parasynechococcus marenigrum (strain WH8102).